A 98-amino-acid polypeptide reads, in one-letter code: Co-chaperonin GroES (98 aa).

This sequence belongs to the GroES chaperonin family. Heptamer of 7 subunits arranged in a ring. Interacts with the chaperonin GroEL.

It is found in the cytoplasm. In terms of biological role, together with the chaperonin GroEL, plays an essential role in assisting protein folding. The GroEL-GroES system forms a nano-cage that allows encapsulation of the non-native substrate proteins and provides a physical environment optimized to promote and accelerate protein folding. GroES binds to the apical surface of the GroEL ring, thereby capping the opening of the GroEL channel. In Clavibacter michiganensis subsp. michiganensis (strain NCPPB 382), this protein is Co-chaperonin GroES.